The chain runs to 504 residues: Tyrosine-protein phosphatase non-receptor type substrate 1 (504 aa).

A signal peptide spans 1–30; the sequence is MEPAGPAPGRLGPLLCLLLAASCAWSGVAG. The Extracellular segment spans residues 31–373; the sequence is EEELQVIQPD…NTGSNERNIY (343 aa). The region spanning 32–137 is the Ig-like V-type domain; sequence EELQVIQPDK…SPDDVEFKSG (106 aa). 2 disulfide bridges follow: cysteine 55–cysteine 121 and cysteine 170–cysteine 228. 2 consecutive Ig-like C1-type domains span residues 148-247 and 254-348; these read PSAP…ANLS and PTLE…HDLK. Residues asparagine 245, asparagine 270, asparagine 292, and asparagine 319 are each glycosylated (N-linked (GlcNAc...) asparagine). Cysteine 273 and cysteine 331 are joined by a disulfide. Over residues 336-355 the composition is skewed to basic and acidic residues; it reads DGQPAVSKSHDLKVSAHPKE. The segment at 336-364 is disordered; the sequence is DGQPAVSKSHDLKVSAHPKEQGSNTAAEN. A helical transmembrane segment spans residues 374 to 394; the sequence is IVVGVVCTLLVALLMAALYLV. Residues 395-504 lie on the Cytoplasmic side of the membrane; the sequence is RIRQKKAQGS…EYASVQVPRK (110 aa). Residues 402–504 are disordered; that stretch reads QGSTSSTRLH…EYASVQVPRK (103 aa). Positions 409 to 421 are enriched in basic and acidic residues; the sequence is RLHEPEKNAREIT. The residue at position 429 (tyrosine 429) is a Phosphotyrosine; by Tyr-kinases. An SH2-binding motif is present at residues 429–432; that stretch reads YADL. Positions 439-444 match the SH3-binding motif; the sequence is KPAPQA. Positions 446 to 467 are enriched in polar residues; sequence EPNNHTEYASIQTSPQPASEDT. Phosphotyrosine; by Tyr-kinases occurs at positions 453 and 470. 3 consecutive short sequence motifs (SH2-binding) follow at residues 453–456, 470–473, and 496–499; these read YASI, YADL, and YASV. Tyrosine 496 is subject to Phosphotyrosine.

In terms of assembly, binds PTPN11 when tyrosine-phosphorylated, except in macrophages, where it primarily binds PTPN6. Binds GRB2 in vitro. Binds FGR. Binds JAK2 irrespective of its phosphorylation status and forms a stable complex. Binds SCAP1 and/or SCAP2. The resulting complex recruits FYB1. Binds PTK2B. Interacts with TRIM2. In terms of processing, N-glycosylated. Phosphorylated on tyrosine residues in response to stimulation with EGF, growth hormone, insulin and PDGF. Dephosphorylated by PTPN11. Ubiquitous. Highly expressed in brain. Detected on myeloid cells, but not T-cells. Detected at lower levels in heart, placenta, lung, testis, ovary, colon, liver, small intestine, prostate, spleen, kidney, skeletal muscle and pancreas.

Its subcellular location is the membrane. In terms of biological role, immunoglobulin-like cell surface receptor for CD47. Acts as docking protein and induces translocation of PTPN6, PTPN11 and other binding partners from the cytosol to the plasma membrane. Supports adhesion of cerebellar neurons, neurite outgrowth and glial cell attachment. May play a key role in intracellular signaling during synaptogenesis and in synaptic function. Involved in the negative regulation of receptor tyrosine kinase-coupled cellular responses induced by cell adhesion, growth factors or insulin. Mediates negative regulation of phagocytosis, mast cell activation and dendritic cell activation. CD47 binding prevents maturation of immature dendritic cells and inhibits cytokine production by mature dendritic cells. Plays a role in antiviral immunity and limits new world arenavirus infection by decreasing virus internalization. Receptor for THBS1. Interaction with THBS1 stimulates phosphorylation of SIRPA. In response to THBS1, involved in ROS signaling in non-phagocytic cells, stimulating NADPH oxidase-derived ROS production. The sequence is that of Tyrosine-protein phosphatase non-receptor type substrate 1 (SIRPA) from Homo sapiens (Human).